Reading from the N-terminus, the 230-residue chain is Cytidylate kinase (230 aa).

Residue 10–18 participates in ATP binding; it reads GFSSTGKST.

The protein belongs to the cytidylate kinase family. Type 1 subfamily.

The protein localises to the cytoplasm. The enzyme catalyses CMP + ATP = CDP + ADP. The catalysed reaction is dCMP + ATP = dCDP + ADP. The sequence is that of Cytidylate kinase from Flavobacterium johnsoniae (strain ATCC 17061 / DSM 2064 / JCM 8514 / BCRC 14874 / CCUG 350202 / NBRC 14942 / NCIMB 11054 / UW101) (Cytophaga johnsonae).